A 643-amino-acid chain; its full sequence is MGQESSKPVWPNPTGGYQSNTGRRYGRRHAYVSFRPPTSQRERIASQRKTNSEVPMHRSAPSQTTKRSRSPFSTTRRSWDDSESSGTNLNIDNEDYSRYPPREYRASGSRRGMAYGHIDSYGADDSEEEGAGPVERPPVRGKTGKFKDDKLYDPEKGARSLAGPPPHFSSFSRDVREERDKLDPVPAARCSASRADFLPQSSVASQSSSEGKLATKGDSSERERREQNLPARPSRAPVSICGGGENTSKSAEEPVVRPKIRNLASPNCVKPKIFFDTDDDDDMPHSTSRWRDTANDNEGHSDGLARRGRGESSSGYPEPKYPEDKREARSDQVKPEKVPRRRRTMADPDFWTHSDDYYKYCDEDSDSDKEWIAALRRKYRSREQTLSSSGESWETLPGKEEREPPQAKVSASTGTSPGPGASASAGAGAGASAGSNGSNYLEEVREPSLQEEQASLEEGEIPWLQYHENDSSSEGDNDSGHELMQPGVFMLDGNNNLEDDSSVSEDLEVDWSLFDGFADGLGVAEAISYVDPQFLTYMALEERLAQAMETALAHLESLAVDVEVANPPASKESIDALPEILVTEDHGAVGQEMCCPICCSEYVKGEVATELPCHHYFHKPCVSIWLQKSGTCPVCRCMFPPPL.

Positions 1-363 (MGQESSKPVW…SDDYYKYCDE (363 aa)) are disordered. 3 stretches are compositionally biased toward basic and acidic residues: residues 95-105 (DYSRYPPREYR), 145-158 (KFKD…EKGA), and 173-183 (RDVREERDKLD). The segment covering 200–209 (QSSVASQSSS) has biased composition (low complexity). A compositionally biased stretch (basic and acidic residues) spans 213–227 (LATKGDSSERERREQ). Phosphoserine is present on Ser265. The residue at position 277 (Thr277) is a Phosphothreonine. 2 stretches are compositionally biased toward basic and acidic residues: residues 289 to 310 (RWRD…RGRG) and 320 to 362 (KYPE…KYCD). 2 positions are modified to phosphoserine: Ser365 and Ser367. Residues 380–454 (RSREQTLSSS…REPSLQEEQA (75 aa)) are disordered. The segment covering 410 to 439 (SASTGTSPGPGASASAGAGAGASAGSNGSN) has biased composition (low complexity). The RING-type zinc finger occupies 595–636 (CPICCSEYVKGEVATELPCHHYFHKPCVSIWLQKSGTCPVCR).

As to quaternary structure, binds ubiquitin-conjugating enzymes (E2s). In vitro, interacts with the ubiquitin-conjugating enzyme, UBE2D2. Substrate for E2-dependent ubiquitination. In terms of tissue distribution, expressed in various regions of the brain including the cerebellum, cerebral cortex, medulla, occipital pole, frontal lobe, temporal lobe and putamen. Highest levels in the cerebral cortex.

The catalysed reaction is S-ubiquitinyl-[E2 ubiquitin-conjugating enzyme]-L-cysteine + [acceptor protein]-L-lysine = [E2 ubiquitin-conjugating enzyme]-L-cysteine + N(6)-ubiquitinyl-[acceptor protein]-L-lysine.. Its function is as follows. Has E2-dependent E3 ubiquitin-protein ligase activity. Ubiquitinates MAGED1 antigen leading to its subsequent degradation by proteasome. May be involved in protein sorting. This is E3 ubiquitin-protein ligase Praja-1 (PJA1) from Homo sapiens (Human).